The sequence spans 85 residues: Putative membrane protein insertion efficiency factor (85 aa).

This sequence belongs to the UPF0161 family.

The protein localises to the cell inner membrane. Functionally, could be involved in insertion of integral membrane proteins into the membrane. In Serratia proteamaculans (strain 568), this protein is Putative membrane protein insertion efficiency factor.